Reading from the N-terminus, the 421-residue chain is Imidazolonepropionase (421 aa).

Fe(3+) is bound by residues His80 and His82. Zn(2+) is bound by residues His80 and His82. The 4-imidazolone-5-propanoate site is built by Arg89, Tyr152, and His185. An N-formimidoyl-L-glutamate-binding site is contributed by Tyr152. His249 is a Fe(3+) binding site. His249 contacts Zn(2+). A 4-imidazolone-5-propanoate-binding site is contributed by Glu252. Position 324 (Asp324) interacts with Fe(3+). Asp324 is a binding site for Zn(2+). Residues Asn326 and Gly328 each coordinate N-formimidoyl-L-glutamate. A 4-imidazolone-5-propanoate-binding site is contributed by Ser329.

Belongs to the metallo-dependent hydrolases superfamily. HutI family. Zn(2+) is required as a cofactor. Requires Fe(3+) as cofactor.

It is found in the cytoplasm. The enzyme catalyses 4-imidazolone-5-propanoate + H2O = N-formimidoyl-L-glutamate. It participates in amino-acid degradation; L-histidine degradation into L-glutamate; N-formimidoyl-L-glutamate from L-histidine: step 3/3. Its function is as follows. Catalyzes the hydrolytic cleavage of the carbon-nitrogen bond in imidazolone-5-propanoate to yield N-formimidoyl-L-glutamate. It is the third step in the universal histidine degradation pathway. The polypeptide is Imidazolonepropionase (Bacillus velezensis (strain DSM 23117 / BGSC 10A6 / LMG 26770 / FZB42) (Bacillus amyloliquefaciens subsp. plantarum)).